The sequence spans 312 residues: Methionyl-tRNA formyltransferase (312 aa).

A (6S)-5,6,7,8-tetrahydrofolate-binding site is contributed by 109–112 (SLLP).

Belongs to the Fmt family.

It catalyses the reaction L-methionyl-tRNA(fMet) + (6R)-10-formyltetrahydrofolate = N-formyl-L-methionyl-tRNA(fMet) + (6S)-5,6,7,8-tetrahydrofolate + H(+). Its function is as follows. Attaches a formyl group to the free amino group of methionyl-tRNA(fMet). The formyl group appears to play a dual role in the initiator identity of N-formylmethionyl-tRNA by promoting its recognition by IF2 and preventing the misappropriation of this tRNA by the elongation apparatus. The polypeptide is Methionyl-tRNA formyltransferase (Ruminiclostridium cellulolyticum (strain ATCC 35319 / DSM 5812 / JCM 6584 / H10) (Clostridium cellulolyticum)).